Here is a 153-residue protein sequence, read N- to C-terminus: Nucleoside diphosphate kinase 3 (153 aa).

Positions 11, 59, 87, 93, 104, and 114 each coordinate ATP. His117 (pros-phosphohistidine intermediate) is an active-site residue.

It belongs to the NDK family. As to quaternary structure, homohexamer. The cofactor is Mg(2+).

The protein resides in the plastid. It is found in the chloroplast thylakoid lumen. The catalysed reaction is a 2'-deoxyribonucleoside 5'-diphosphate + ATP = a 2'-deoxyribonucleoside 5'-triphosphate + ADP. It catalyses the reaction a ribonucleoside 5'-diphosphate + ATP = a ribonucleoside 5'-triphosphate + ADP. Major role in the synthesis of nucleoside triphosphates other than ATP. The ATP gamma phosphate is transferred to the NDP beta phosphate via a ping-pong mechanism, using a phosphorylated active-site intermediate. Shows the highest specificity towards GDP. The chain is Nucleoside diphosphate kinase 3 from Spinacia oleracea (Spinach).